Reading from the N-terminus, the 573-residue chain is NADP-dependent malic enzyme, chloroplastic (573 aa).

Tyrosine 123 (proton donor) is an active-site residue. Arginine 176 serves as a coordination point for NAD(+). Residue lysine 194 is the Proton acceptor of the active site. Residues glutamate 265, aspartate 266, and aspartate 289 each coordinate a divalent metal cation. Aspartate 289 contacts NAD(+). 318–334 contributes to the NADP(+) binding site; it reads LFLGAGEAGTGIAELIA. Asparagine 430 provides a ligand contact to NAD(+).

This sequence belongs to the malic enzymes family. As to quaternary structure, homotetramer. Requires Mg(2+) as cofactor. Mn(2+) is required as a cofactor.

Its subcellular location is the plastid. It localises to the chloroplast. It catalyses the reaction (S)-malate + NADP(+) = pyruvate + CO2 + NADPH. The catalysed reaction is oxaloacetate + H(+) = pyruvate + CO2. It participates in photosynthesis; C4 acid pathway. Functionally, the chloroplastic ME isoform decarboxylates malate shuttled from neighboring mesophyll cells. The CO(2) released is then refixed by ribulose-bisphosphate carboxylase. This pathway eliminates the photorespiratory loss of CO(2) that occurs in most plants. The sequence is that of NADP-dependent malic enzyme, chloroplastic from Solanum lycopersicum (Tomato).